A 257-amino-acid polypeptide reads, in one-letter code: 1-(5-phosphoribosyl)-5-[(5-phosphoribosylamino)methylideneamino] imidazole-4-carboxamide isomerase (257 aa).

The Proton acceptor role is filled by Asp8. Asp129 functions as the Proton donor in the catalytic mechanism.

It belongs to the HisA/HisF family.

Its subcellular location is the cytoplasm. The enzyme catalyses 1-(5-phospho-beta-D-ribosyl)-5-[(5-phospho-beta-D-ribosylamino)methylideneamino]imidazole-4-carboxamide = 5-[(5-phospho-1-deoxy-D-ribulos-1-ylimino)methylamino]-1-(5-phospho-beta-D-ribosyl)imidazole-4-carboxamide. The protein operates within amino-acid biosynthesis; L-histidine biosynthesis; L-histidine from 5-phospho-alpha-D-ribose 1-diphosphate: step 4/9. The protein is 1-(5-phosphoribosyl)-5-[(5-phosphoribosylamino)methylideneamino] imidazole-4-carboxamide isomerase of Rippkaea orientalis (strain PCC 8801 / RF-1) (Cyanothece sp. (strain PCC 8801)).